The primary structure comprises 506 residues: Lysine--tRNA ligase (506 aa).

2 residues coordinate Mg(2+): E416 and E423.

Belongs to the class-II aminoacyl-tRNA synthetase family. As to quaternary structure, homodimer. Mg(2+) is required as a cofactor.

The protein resides in the cytoplasm. The enzyme catalyses tRNA(Lys) + L-lysine + ATP = L-lysyl-tRNA(Lys) + AMP + diphosphate. This chain is Lysine--tRNA ligase, found in Xylella fastidiosa (strain M23).